A 114-amino-acid polypeptide reads, in one-letter code: Early 4 ORF4 protein (114 aa).

The short motif at 66–75 (RAKRRDRRRR) is the Nuclear localization signal element.

Belongs to the adenoviridae E4 ORF4 family. In terms of assembly, interacts with host BAZ1A/ACF1, host PPP2R2A/PP2a-B55alpha subunit, and host PPP2R5E/PP2a-B'B56 subunit. May interact with host SRC. In terms of processing, may be phosphorylated by host SRC kinase.

The protein localises to the host nucleus. Its subcellular location is the host cytoplasm. Functionally, plays a role in viral alternative pre-mRNA splicing. Activates dephosphorylation by protein phosphatase 2A of host SR proteins and converts their splicing properties. When expressed alone ex vivo, induces p53/TP53-independent apoptosis called cytoplasmic death. May mimic nutrient/growth signals to activate the host mTOR pathway. In Homo sapiens (Human), this protein is Early 4 ORF4 protein.